A 118-amino-acid chain; its full sequence is Large ribosomal subunit protein uL18 (118 aa).

The interval 1–24 (MISKPDKNKIRQKRHRRVRGKLSG) is disordered. A compositionally biased stretch (basic residues) spans 10–20 (IRQKRHRRVRG).

The protein belongs to the universal ribosomal protein uL18 family. In terms of assembly, part of the 50S ribosomal subunit; part of the 5S rRNA/L5/L18/L25 subcomplex. Contacts the 5S and 23S rRNAs.

Its function is as follows. This is one of the proteins that bind and probably mediate the attachment of the 5S RNA into the large ribosomal subunit, where it forms part of the central protuberance. The sequence is that of Large ribosomal subunit protein uL18 from Streptococcus mutans serotype c (strain ATCC 700610 / UA159).